A 249-amino-acid polypeptide reads, in one-letter code: Probable transcriptional regulatory protein Csal_1845 (249 aa).

This sequence belongs to the TACO1 family.

Its subcellular location is the cytoplasm. This is Probable transcriptional regulatory protein Csal_1845 from Chromohalobacter salexigens (strain ATCC BAA-138 / DSM 3043 / CIP 106854 / NCIMB 13768 / 1H11).